Here is a 1828-residue protein sequence, read N- to C-terminus: MAPWRKTDKERHGVAIYNFQGSEAQHLTLQIGDVVRIQETCGDWYRGYLIKHKLSQGIFPTSFIHLKEVTVEKRRNIENIIPAEIPLAQEVTTTLWEWGSIWKQLYVASKKERFLQVQSMMYDLMEWRSQLLSGTLPKDELKELKQKVTSKIDYGNKILELDLIVRDEDGNILDPDKTSVISLFHAHEEATYKITERIKEEMSKDQPDYGVYSRISSSPTHSLYVFVRNFVCRIGEDAELFMSLYDPHKQTVISENYLVRWGSKGFPKEIEMLNNLKVVFTDLGNKDLNRDKIFLICQIVRIGKMDLKDINAKKCTQGLRRPFGVAVMDITDIIKGKAESDEEKQHFIPFHPVSAENDFLHSLLGKVIASKGDSGGQGLWVTMKMLVGDIIQIRKDYPHLVDRTTVVARKLGFPEIIMPGDVRNDIYITLLQGDFDKYTKTTQRNVEVIMCVCTEDGKVLPNAICVGAGDKAMNEYHSVVYYQVKQPRWMETVKVAVPIEDMQRIHLRFMFRHRSSLESKDKGEKNFAMSYVKLMKEDGTTLHDGYHELVVLKGDSKKMEDASAYLTLPSYRHPVENKGATLSRSSSSVGGLSVSSRDVFSISTLVCSTKLTQNVGLLGLLKWRMKPQLLQENLEKLKIVDGEEVVKFLQDTLDALFNIMMEHSQSNEYDILVFDALIYIIGLIADRKFQHFNTVLEAYIQQHFSATLAYKKLMTVLKTYLDTSSRGEQCEPILRTLKALEYVFKFIVRSRTLFSQLYEGKEQMEFEESMRRLFESINNLMKSQYKTTILLQVAALKYIPSVLHDVETVFDAKLLSQLLYEFYTCIPPVKLQKQKVQSMNEIVQSNLFKKQECRDILLPVITKELKELLEQRDDGQHQAEKKHCVELLNSILEVLSCQDAAFTYDHIQEIMVQLLRTVNRTVITMGRDHALISHFVACMTAILDQMGDQHYSFYIETFQTSSDLVDFLMETFIMFKDLIGKNVYPGDWMAMSMVQNRVFLRAINKFAETMNQKFLEHTSFEFQLWNNYFHLAVAFITQDSLQLEQFTHAKYNKILNKYGDMRRLIGFSIRDMWYKLGQNKICFIPGMVGPILEMTLIPEAELRKATIPIFFDMMLCEYQRTGAFKKFENEIILKLDHEVEGGRGDEQYMQLLESILMECTAEHPTIAKSVENFVSLVKGLLEKLLDYRGVMTDESKDNRMSCTVNLLNFYKDNNREEMYIRYLYKLRDLHLDCENYTEAAYTLLLHTWLLKWSDEQCASQVMQTGQQHPQTHRQLKETLYETIIGYFDKGKMWEEAISLCKELAEQYEMEIFDYELLSQNLTQQAKFYENIMKILRTKPDYFAVGYYGQGFPSFLRNKVFIYRGKEYERREDFQMQLLSQFPNAEKMNTTSAPGDDVRNAPGQYIQCFTVQPVLDEHPRFKNKPVPDQIINFYKSNYVQKFHYSRPVRRGKVDPENEFASMWIERTSFLTAYKLPGILRWFEVVHMSQTTISPLENAIETMSTVNEKILMMINQYQSDESLPINPLSMLLNGIVDPAVMGGFAKYEKAFFTEEYSREHPEDQDKLSHLKDLIAWQIPFLGAGIKIHEKRVSDNLRPFHDRMEECFKNLKMKVEKEYGVREMPDFEDRRVGRPRSMLRSYRQMSVISLASMHSDCSTPSKVPAESFDLESAPPKTPKVEEEPISPGSTLPEVKLRRSKKRTKRSSVVFADEKAATESDLKRLSRKQEFMSDTNLSEHAAIPARVSILSQMSFASQSMPTIPALTLSVAGVPGLDEANTSPRLSQTFFQVSDGDKKTLKKKKVNQFFKTMLASKSSEESKQIPDFLSTNM.

The region spanning Asp-8–Val-69 is the SH3 domain. At Lys-304 the chain carries N6-acetyllysine. Residues Arg-423 to Cys-607 form the C2 DOCK-type domain. A phosphoserine mark is found at Ser-588 and Ser-593. Lys-738 carries the N6-acetyllysine modification. The DOCKER domain maps to Tyr-1210–Met-1621. Positions Ser-1652–Ser-1703 are disordered. Phosphoserine occurs at positions 1683, 1704, 1729, and 1782.

This sequence belongs to the DOCK family. In terms of assembly, homodimer. Interacts with RAC1 and RAC2. Interacts with CRKL and VAV. Interacts with CD3Z. Specifically expressed in hematopoietic cells.

The protein resides in the endomembrane system. The protein localises to the cytoplasm. It is found in the cytoskeleton. In terms of biological role, involved in cytoskeletal rearrangements required for lymphocyte migration in response of chemokines. Activates RAC1 and RAC2, but not CDC42, by functioning as a guanine nucleotide exchange factor (GEF), which exchanges bound GDP for free GTP. May also participate in IL2 transcriptional activation via the activation of RAC2. The protein is Dedicator of cytokinesis protein 2 (Dock2) of Mus musculus (Mouse).